A 737-amino-acid polypeptide reads, in one-letter code: Fibronectin type III domain-containing protein 7 (737 aa).

The first 25 residues, 1–25, serve as a signal peptide directing secretion; that stretch reads MAGRPEKCFSLIRFTLLCLKMVISS. Fibronectin type-III domains follow at residues 28–115, 116–203, 204–288, 289–373, 374–459, 460–544, 545–633, and 631–715; these read APEI…TVLA, APVL…SPRA, PANI…TVAC, APGR…TAPC, CPND…TAPC, SPEI…TVPC, CPAG…CPLG, and PLGV…YSVT. An N-linked (GlcNAc...) asparagine glycan is attached at N230. N-linked (GlcNAc...) asparagine glycosylation is present at N433.

The protein localises to the secreted. This chain is Fibronectin type III domain-containing protein 7 (Fndc7), found in Mus musculus (Mouse).